Reading from the N-terminus, the 339-residue chain is Transaldolase (339 aa).

The active-site Schiff-base intermediate with substrate is the Lys135.

The protein belongs to the transaldolase family. Type 1 subfamily. As to quaternary structure, homodimer.

The protein localises to the cytoplasm. The catalysed reaction is D-sedoheptulose 7-phosphate + D-glyceraldehyde 3-phosphate = D-erythrose 4-phosphate + beta-D-fructose 6-phosphate. Its pathway is carbohydrate degradation; pentose phosphate pathway; D-glyceraldehyde 3-phosphate and beta-D-fructose 6-phosphate from D-ribose 5-phosphate and D-xylulose 5-phosphate (non-oxidative stage): step 2/3. Functionally, transaldolase is important for the balance of metabolites in the pentose-phosphate pathway. The polypeptide is Transaldolase (Prochlorococcus marinus (strain MIT 9211)).